A 578-amino-acid polypeptide reads, in one-letter code: MKASRFFIGTLKEAPADAEIVSHKLMVRAGMIRRVAGGIYNYLPVGLRSIRKVEAIVREEMNRAGAIELLMPAVQPAELWQESGRWEQYGPELLRFKDRKDNDFVIGPTHEEVVTDIARNQIKSYRQMPVNFYQIQTKFRDEIRPRFGVMRGREFIMKDAYSFDKDAAGLNESYRKMYDAYVRIFSRLGLEFRAVAADSGSIGGNFSHEFHVIADTGEDAIAYCPTSEFAANVEAAEALPLIAERAAPAEAMEKVATPGKAKCEAVAELLSIPLERTIKSIVLATDNEGAEPTIWLVMLRGDHDLNEIKVSKLPGLKNHRFATEQEIVEWFGTPPGYLGPVGTKKPVKVIADRTVANMSDFVVGANEVDYHIAGVNWGRDLPEPDVADVRNVKKGDPSPDGKGVIDICRGIEVGHVFQLGTKYSEAMGATFLDESGKPQPMLMGCYGVGITRILGAAIEQNFDDRGIIWPESIAPFEVVLCPMGYDRSDLVRETADKLYAELVAAGIDVILDDRGERPGVMFADWELIGVPHRLVIGERGLKEGKIEYQGRRDAEATLLPADTAAATVAEKIRAALAH.

The protein belongs to the class-II aminoacyl-tRNA synthetase family. ProS type 1 subfamily. In terms of assembly, homodimer.

The protein localises to the cytoplasm. The catalysed reaction is tRNA(Pro) + L-proline + ATP = L-prolyl-tRNA(Pro) + AMP + diphosphate. Its function is as follows. Catalyzes the attachment of proline to tRNA(Pro) in a two-step reaction: proline is first activated by ATP to form Pro-AMP and then transferred to the acceptor end of tRNA(Pro). As ProRS can inadvertently accommodate and process non-cognate amino acids such as alanine and cysteine, to avoid such errors it has two additional distinct editing activities against alanine. One activity is designated as 'pretransfer' editing and involves the tRNA(Pro)-independent hydrolysis of activated Ala-AMP. The other activity is designated 'posttransfer' editing and involves deacylation of mischarged Ala-tRNA(Pro). The misacylated Cys-tRNA(Pro) is not edited by ProRS. This chain is Proline--tRNA ligase, found in Burkholderia cenocepacia (strain ATCC BAA-245 / DSM 16553 / LMG 16656 / NCTC 13227 / J2315 / CF5610) (Burkholderia cepacia (strain J2315)).